The primary structure comprises 479 residues: Calcium/calmodulin-dependent protein kinase type II delta chain (479 aa).

The 259-residue stretch at tyrosine 14–isoleucine 272 folds into the Protein kinase domain. ATP is bound by residues leucine 20–valine 28 and lysine 43. The Proton acceptor role is filled by aspartate 136. Residue threonine 287 is modified to Phosphothreonine. A phosphoserine mark is found at serine 315 and serine 319. Threonine 337 carries the post-translational modification Phosphothreonine.

It belongs to the protein kinase superfamily. CAMK Ser/Thr protein kinase family. CaMK subfamily. As to quaternary structure, CAMK2 is composed of four different chains: alpha, beta, gamma, and delta. The different isoforms assemble into homo- or heteromultimeric holoenzymes composed of 8 to 12 subunits.

It carries out the reaction L-seryl-[protein] + ATP = O-phospho-L-seryl-[protein] + ADP + H(+). It catalyses the reaction L-threonyl-[protein] + ATP = O-phospho-L-threonyl-[protein] + ADP + H(+). Autophosphorylation of CAMK2 plays an important role in the regulation of the kinase activity. Functionally, caM-kinase II (CAMK2) is a prominent kinase in the central nervous system. The protein is Calcium/calmodulin-dependent protein kinase type II delta chain (CAMK2D) of Gallus gallus (Chicken).